Here is a 333-residue protein sequence, read N- to C-terminus: Arylacetonitrilase (333 aa).

A CN hydrolase domain is found at 9 to 284 (VRVAVTQAEP…EGIIYADLEM (276 aa)). Residue glutamate 49 is the Proton acceptor of the active site. Lysine 129 is a catalytic residue. The active-site Nucleophile is cysteine 164.

This sequence belongs to the carbon-nitrogen hydrolase superfamily. Nitrilase family.

It catalyses the reaction a nitrile + 2 H2O = a carboxylate + NH4(+). It carries out the reaction 4-chlorophenylacetonitrile + 2 H2O = 4-chlorophenylacetate + NH4(+). Its function is as follows. Nitrilase that hydrolyzes preferentially phenylacetonitrile, (R,S)-mandelonitrile, and 3-indolylacetonitrile. This chain is Arylacetonitrilase, found in Aspergillus oryzae (strain ATCC 42149 / RIB 40) (Yellow koji mold).